Reading from the N-terminus, the 253-residue chain is 5-oxoprolinase subunit A (253 aa).

It belongs to the LamB/PxpA family. Forms a complex composed of PxpA, PxpB and PxpC.

The enzyme catalyses 5-oxo-L-proline + ATP + 2 H2O = L-glutamate + ADP + phosphate + H(+). Its function is as follows. Catalyzes the cleavage of 5-oxoproline to form L-glutamate coupled to the hydrolysis of ATP to ADP and inorganic phosphate. The sequence is that of 5-oxoprolinase subunit A from Bacillus cereus (strain ATCC 10987 / NRS 248).